The following is a 153-amino-acid chain: Coiled-coil domain-containing protein 182 (153 aa).

The stretch at 46 to 109 (ADLEILQQKV…RLREEEDRGI (64 aa)) forms a coiled coil.

The chain is Coiled-coil domain-containing protein 182 (CCDC182) from Homo sapiens (Human).